Consider the following 380-residue polypeptide: Actinidain (380 aa).

The first 24 residues, 1–24 (MGLPKSFVSMSLLFFSTLLILSLA), serve as a signal peptide directing secretion. The propeptide at 25-126 (FNAKNLTQRT…NQYEPRVGQV (102 aa)) is activation peptide. 3 disulfide bridges follow: Cys-148-Cys-191, Cys-182-Cys-224, and Cys-282-Cys-332. Cys-151 is a catalytic residue. E64 is bound at residue Cys-151. Residues His-288 and Asn-308 contribute to the active site.

It belongs to the peptidase C1 family. As to expression, fruit.

The catalysed reaction is Specificity close to that of papain.. With respect to regulation, repressed by the active-site-directed cysteine protease inhibitor E64 (L-trans-epoxysuccinyl-leucylamide-(4-guanido)-butane) produced by Aspergillus japonicus. Its function is as follows. Cysteine protease responsible for the cleavage of kiwellin into kissper and KiTH. The protein is Actinidain of Actinidia chinensis var. chinensis (Chinese soft-hair kiwi).